Here is a 379-residue protein sequence, read N- to C-terminus: Nitric oxide reductase FlRd-NAD(+) reductase (379 aa).

The protein belongs to the FAD-dependent oxidoreductase family. FAD is required as a cofactor.

Its subcellular location is the cytoplasm. The catalysed reaction is 2 reduced [nitric oxide reductase rubredoxin domain] + NAD(+) + H(+) = 2 oxidized [nitric oxide reductase rubredoxin domain] + NADH. Its pathway is nitrogen metabolism; nitric oxide reduction. Functionally, one of at least two accessory proteins for anaerobic nitric oxide (NO) reductase. Reduces the rubredoxin moiety of NO reductase. In Pectobacterium atrosepticum (strain SCRI 1043 / ATCC BAA-672) (Erwinia carotovora subsp. atroseptica), this protein is Nitric oxide reductase FlRd-NAD(+) reductase.